Consider the following 265-residue polypeptide: ATP synthase subunit a (265 aa).

The next 6 helical transmembrane spans lie at 26–46 (VHLD…FFFY), 88–108 (IGSL…IDLI), 132–152 (DISA…FYTI), 168–188 (PFNH…TLLA), 195–217 (FRLF…MYMA), and 231–251 (LIWA…FMML).

The protein belongs to the ATPase A chain family. As to quaternary structure, F-type ATPases have 2 components, CF(1) - the catalytic core - and CF(0) - the membrane proton channel. CF(1) has five subunits: alpha(3), beta(3), gamma(1), delta(1), epsilon(1). CF(0) has three main subunits: a(1), b(2) and c(9-12). The alpha and beta chains form an alternating ring which encloses part of the gamma chain. CF(1) is attached to CF(0) by a central stalk formed by the gamma and epsilon chains, while a peripheral stalk is formed by the delta and b chains.

Its subcellular location is the cell inner membrane. Functionally, key component of the proton channel; it plays a direct role in the translocation of protons across the membrane. This chain is ATP synthase subunit a, found in Histophilus somni (strain 2336) (Haemophilus somnus).